The primary structure comprises 79 residues: Small ribosomal subunit protein bS18 (79 aa).

This sequence belongs to the bacterial ribosomal protein bS18 family. Part of the 30S ribosomal subunit. Forms a tight heterodimer with protein bS6.

Functionally, binds as a heterodimer with protein bS6 to the central domain of the 16S rRNA, where it helps stabilize the platform of the 30S subunit. The polypeptide is Small ribosomal subunit protein bS18 (Latilactobacillus sakei subsp. sakei (strain 23K) (Lactobacillus sakei subsp. sakei)).